A 418-amino-acid polypeptide reads, in one-letter code: MNLSRFASRLRMAEEISKTKVGSSSTASVADSSAAASAATNAAKSRWKILWPNSLRWIPTSTDYIIAAEKRLLSILKTPYVQEQVSIGSGPPGSKIRWFRSTSNESRYINTVTFDAKEGAPTLVMVHGYGASQGFFFRNFDALASRFRVIAIDQLGWGGSSRPDFTCRSTEETEAWFIDSFEEWRKAQNLSNFILLGHSFGGYVAAKYALKHPEHVQHLILVGSAGFSAEADAKSEWLTKFRATWKGAVLNHLWESNFTPQKLVRGLGPWGPGLVNRYTTARFGAHSEGTGLTEEEAKLLTDYVYHTLAAKASGELCLKYIFSFGAFARKPLLQSASEWKVPTTFIYGMNDWMNYQGAVEARKSMKVPCEIIRVPQGGHFVFIDNPIGFHSAVLYACRKFISQDSSHDQQLLDGLRLV.

The 131-residue stretch at 121–251 (PTLVMVHGYG…RATWKGAVLN (131 aa)) folds into the AB hydrolase-1 domain. A GXSXG motif is present at residues 197–201 (GHSFG). The HXXXXD motif signature appears at 379–384 (HFVFID).

This sequence belongs to the peptidase S33 family. ABHD4/ABHD5 subfamily.

It is found in the cytoplasm. It carries out the reaction a 1-acyl-sn-glycero-3-phosphate + an acyl-CoA = a 1,2-diacyl-sn-glycero-3-phosphate + CoA. Lysophosphatidic acid acyltransferase which functions in phosphatidic acid biosynthesis. Is highly specific for lysophosphatidic acid and able to use different acyl-CoA donors. May regulate neutral lipid accumulation and participate in the regulation of lipid turnover in vegetative cells. Possesses additional triacylglycerol lipase and phospholipase A2 activities in vitro. Is not active as esterase or lysophospholipase. This Arabidopsis thaliana (Mouse-ear cress) protein is 1-acylglycerol-3-phosphate O-acyltransferase.